Consider the following 223-residue polypeptide: GRF1-interacting factor 3 (223 aa).

The interval 179 to 223 (ANNAGPNDASGGGKPDGTNMSQSGADGQGGSAARHGGGDAKTEGK) is disordered. A compositionally biased stretch (basic and acidic residues) spans 214–223 (GGGDAKTEGK).

It belongs to the SS18 family. In terms of assembly, interacts with GRF1. In terms of tissue distribution, predominantly expressed in shoot tips containing the shoot apical meristem (SAM) and flower buds. Also expressed in mature flowers.

Transcription coactivator that plays a role in the regulation of cell expansion in leaf and cotyledons tissues. Component of a network formed by miR396, the GRFs and their interacting factors (GIFs) acting in the regulation of meristem function, at least partially through the control of cell proliferation. GIFs are involved in the positive regulation of cell proliferation of lateral organs in a functionally redundant manner. The sequence is that of GRF1-interacting factor 3 (GIF3) from Arabidopsis thaliana (Mouse-ear cress).